The following is a 207-amino-acid chain: Large ribosomal subunit protein uL4 (207 aa).

Positions 45–89 are disordered; that stretch reads RQGTHKVKTRSEVRGGGRKPWRQKGTGRARQGSIRSPQWRGGGTV. Residues 60–71 show a composition bias toward basic residues; sequence GGRKPWRQKGTG.

The protein belongs to the universal ribosomal protein uL4 family. In terms of assembly, part of the 50S ribosomal subunit.

Its function is as follows. One of the primary rRNA binding proteins, this protein initially binds near the 5'-end of the 23S rRNA. It is important during the early stages of 50S assembly. It makes multiple contacts with different domains of the 23S rRNA in the assembled 50S subunit and ribosome. In terms of biological role, forms part of the polypeptide exit tunnel. The polypeptide is Large ribosomal subunit protein uL4 (Bacillus anthracis (strain A0248)).